The primary structure comprises 683 residues: PTS system mannose-specific EIIBCA component (683 aa).

The PTS EIIB type-1 domain occupies 1–89 (MASKLTTTSQ…LKLDGMKHFA (89 aa)). The Phosphocysteine intermediate; for EIIB activity role is filled by Cys28. The PTS EIIC type-1 domain maps to 117–476 (EFLSDTFRPI…NEERDEARAK (360 aa)). 10 consecutive transmembrane segments (helical) span residues 126–146 (ILWA…ADTF), 162–182 (YVFL…MVGA), 193–213 (WIGA…LGSA), 225–245 (VLND…GLYW), 260–280 (MVFV…FLLG), 303–323 (FILS…GLHW), 344–364 (PMGA…LLSI), 376–396 (LGGM…YGVL), 409–429 (GCLA…AFVF), and 442–462 (LGYT…VLAL). Residues 550 to 654 (DPIFAAGKLG…PLITPVVVSN (105 aa)) enclose the PTS EIIA type-1 domain. His602 functions as the Tele-phosphohistidine intermediate; for EIIA activity in the catalytic mechanism.

The protein resides in the cell membrane. It carries out the reaction D-mannose(out) + N(pros)-phospho-L-histidyl-[protein] = D-mannose 6-phosphate(in) + L-histidyl-[protein]. In terms of biological role, the phosphoenolpyruvate-dependent sugar phosphotransferase system (sugar PTS), a major carbohydrate active -transport system, catalyzes the phosphorylation of incoming sugar substrates concomitantly with their translocation across the cell membrane. This system is involved in mannose transport. The protein is PTS system mannose-specific EIIBCA component (ptsM) of Corynebacterium glutamicum (strain ATCC 13032 / DSM 20300 / JCM 1318 / BCRC 11384 / CCUG 27702 / LMG 3730 / NBRC 12168 / NCIMB 10025 / NRRL B-2784 / 534).